The primary structure comprises 375 residues: Succinyl-diaminopimelate desuccinylase (375 aa).

H66 is a Zn(2+) binding site. D68 is an active-site residue. A Zn(2+)-binding site is contributed by D99. Residue E133 is the Proton acceptor of the active site. Zn(2+) contacts are provided by E134, E162, and H348.

It belongs to the peptidase M20A family. DapE subfamily. As to quaternary structure, homodimer. Zn(2+) serves as cofactor. It depends on Co(2+) as a cofactor.

The enzyme catalyses N-succinyl-(2S,6S)-2,6-diaminopimelate + H2O = (2S,6S)-2,6-diaminopimelate + succinate. Its pathway is amino-acid biosynthesis; L-lysine biosynthesis via DAP pathway; LL-2,6-diaminopimelate from (S)-tetrahydrodipicolinate (succinylase route): step 3/3. Catalyzes the hydrolysis of N-succinyl-L,L-diaminopimelic acid (SDAP), forming succinate and LL-2,6-diaminopimelate (DAP), an intermediate involved in the bacterial biosynthesis of lysine and meso-diaminopimelic acid, an essential component of bacterial cell walls. The chain is Succinyl-diaminopimelate desuccinylase from Erwinia tasmaniensis (strain DSM 17950 / CFBP 7177 / CIP 109463 / NCPPB 4357 / Et1/99).